Consider the following 644-residue polypeptide: Ribonuclease R (644 aa).

Positions 211–529 (RINYSHIPFI…LHRLLKELLF (319 aa)) constitute an RNB domain. In terms of domain architecture, S1 motif spans 573–644 (LEFLEKEFLG…ITERIKEHVS (72 aa)).

The protein belongs to the RNR ribonuclease family. RNase R subfamily.

It is found in the cytoplasm. It catalyses the reaction Exonucleolytic cleavage in the 3'- to 5'-direction to yield nucleoside 5'-phosphates.. Functionally, 3'-5' exoribonuclease that releases 5'-nucleoside monophosphates and is involved in maturation of structured RNAs. This is Ribonuclease R from Helicobacter pylori (strain J99 / ATCC 700824) (Campylobacter pylori J99).